We begin with the raw amino-acid sequence, 372 residues long: Lipoyl synthase, mitochondrial (372 aa).

The [4Fe-4S] cluster site is built by cysteine 106, cysteine 111, cysteine 117, cysteine 137, cysteine 141, cysteine 144, and serine 352. One can recognise a Radical SAM core domain in the interval 122–341 (EYGTATATIM…EKAGNELGFL (220 aa)).

It belongs to the radical SAM superfamily. Lipoyl synthase family. The cofactor is [4Fe-4S] cluster.

The protein resides in the mitochondrion. The enzyme catalyses [[Fe-S] cluster scaffold protein carrying a second [4Fe-4S](2+) cluster] + N(6)-octanoyl-L-lysyl-[protein] + 2 oxidized [2Fe-2S]-[ferredoxin] + 2 S-adenosyl-L-methionine + 4 H(+) = [[Fe-S] cluster scaffold protein] + N(6)-[(R)-dihydrolipoyl]-L-lysyl-[protein] + 4 Fe(3+) + 2 hydrogen sulfide + 2 5'-deoxyadenosine + 2 L-methionine + 2 reduced [2Fe-2S]-[ferredoxin]. It functions in the pathway protein modification; protein lipoylation via endogenous pathway; protein N(6)-(lipoyl)lysine from octanoyl-[acyl-carrier-protein]: step 2/2. Catalyzes the radical-mediated insertion of two sulfur atoms into the C-6 and C-8 positions of the octanoyl moiety bound to the lipoyl domains of lipoate-dependent enzymes, thereby converting the octanoylated domains into lipoylated derivatives. The protein is Lipoyl synthase, mitochondrial (lias) of Xenopus laevis (African clawed frog).